The following is a 415-amino-acid chain: Gamma-glutamyl phosphate reductase (415 aa).

The protein belongs to the gamma-glutamyl phosphate reductase family.

The protein localises to the cytoplasm. The catalysed reaction is L-glutamate 5-semialdehyde + phosphate + NADP(+) = L-glutamyl 5-phosphate + NADPH + H(+). It functions in the pathway amino-acid biosynthesis; L-proline biosynthesis; L-glutamate 5-semialdehyde from L-glutamate: step 2/2. Catalyzes the NADPH-dependent reduction of L-glutamate 5-phosphate into L-glutamate 5-semialdehyde and phosphate. The product spontaneously undergoes cyclization to form 1-pyrroline-5-carboxylate. The polypeptide is Gamma-glutamyl phosphate reductase (Thermotoga sp. (strain RQ2)).